The following is a 128-amino-acid chain: Ribonuclease pancreatic (128 aa).

Positions 1–20 (KETAAMKFQRQHMDSGSSLS) are disordered. Substrate is bound by residues Lys-7 and Arg-10. The Proton acceptor role is filled by His-12. 4 disulfides stabilise this stretch: Cys-26–Cys-84, Cys-40–Cys-95, Cys-58–Cys-110, and Cys-65–Cys-72. Asn-34 carries an N-linked (GlcNAc...) asparagine glycan. Substrate is bound by residues 41–45 (KPVNT), Lys-66, and Arg-85. His-119 serves as the catalytic Proton donor.

It belongs to the pancreatic ribonuclease family. In terms of assembly, monomer. Interacts with and forms tight 1:1 complexes with RNH1. Dimerization of two such complexes may occur. Interaction with RNH1 inhibits this protein. As to expression, pancreas.

The protein resides in the secreted. The catalysed reaction is an [RNA] containing cytidine + H2O = an [RNA]-3'-cytidine-3'-phosphate + a 5'-hydroxy-ribonucleotide-3'-[RNA].. It carries out the reaction an [RNA] containing uridine + H2O = an [RNA]-3'-uridine-3'-phosphate + a 5'-hydroxy-ribonucleotide-3'-[RNA].. Endonuclease that catalyzes the cleavage of RNA on the 3' side of pyrimidine nucleotides. Acts on single-stranded and double-stranded RNA. In Choloepus hoffmanni (Hoffmann's two-fingered sloth), this protein is Ribonuclease pancreatic (RNASE1).